The primary structure comprises 283 residues: Pantothenate synthetase (283 aa).

Residue 30 to 37 (MGYLHEGH) coordinates ATP. The active-site Proton donor is the His37. Residue Gln61 coordinates (R)-pantoate. Gln61 contributes to the beta-alanine binding site. Position 147 to 150 (147 to 150 (GLKD)) interacts with ATP. (R)-pantoate is bound at residue Gln153. Residues Val176 and 184-187 (KSSR) contribute to the ATP site.

Belongs to the pantothenate synthetase family. As to quaternary structure, homodimer.

The protein localises to the cytoplasm. It carries out the reaction (R)-pantoate + beta-alanine + ATP = (R)-pantothenate + AMP + diphosphate + H(+). It functions in the pathway cofactor biosynthesis; (R)-pantothenate biosynthesis; (R)-pantothenate from (R)-pantoate and beta-alanine: step 1/1. In terms of biological role, catalyzes the condensation of pantoate with beta-alanine in an ATP-dependent reaction via a pantoyl-adenylate intermediate. In Halalkalibacterium halodurans (strain ATCC BAA-125 / DSM 18197 / FERM 7344 / JCM 9153 / C-125) (Bacillus halodurans), this protein is Pantothenate synthetase.